The following is a 465-amino-acid chain: Putative F-box/LRR-repeat protein At3g28410 (465 aa).

The 47-residue stretch at 27–73 folds into the F-box domain; sequence ADFINYMPDDILHHILSFIPTDLAMRTSVLSRRWRHVWCETPCLDIK. LRR repeat units lie at residues 127 to 155, 178 to 203, 207 to 225, 278 to 302, 332 to 357, 402 to 427, and 447 to 465; these read VRDFTYTKTYRFPDIFYISSSLKQLDVTL, FCQIPDESMHNILSGCPILESLTLDT, LERLDLSKSPNLRRLDINR, ADRYQTMALEMLSKFHNVKRLTVGE, FVRSVIPGISRLLQNSPGLKKLTLHT, TSKLVASFMNLVLRNAKTLERMVVWL, and VETLSHNNNVSILLKQSNC.

The protein is Putative F-box/LRR-repeat protein At3g28410 of Arabidopsis thaliana (Mouse-ear cress).